A 399-amino-acid chain; its full sequence is Elongation factor Tu (399 aa).

The region spanning 10-209 (KPHVNIGTIG…EVDAYIPTPE (200 aa)) is the tr-type G domain. The segment at 19-26 (GHVDHGKT) is G1. 19–26 (GHVDHGKT) is a binding site for GTP. Threonine 26 contributes to the Mg(2+) binding site. The interval 60–64 (GITIA) is G2. The G3 stretch occupies residues 81–84 (DCPG). GTP contacts are provided by residues 81–85 (DCPGH) and 136–139 (NKQD). The segment at 136–139 (NKQD) is G4. Positions 174–176 (SAL) are G5.

The protein belongs to the TRAFAC class translation factor GTPase superfamily. Classic translation factor GTPase family. EF-Tu/EF-1A subfamily. Monomer.

The protein resides in the cytoplasm. The catalysed reaction is GTP + H2O = GDP + phosphate + H(+). In terms of biological role, GTP hydrolase that promotes the GTP-dependent binding of aminoacyl-tRNA to the A-site of ribosomes during protein biosynthesis. The polypeptide is Elongation factor Tu (Helicobacter pylori (strain Shi470)).